The chain runs to 157 residues: Heat shock 22 kDa protein, chloroplastic (157 aa).

One can recognise a sHSP domain in the interval Gly-40 to Thr-155.

The protein belongs to the small heat shock protein (HSP20) family.

It localises to the plastid. The protein resides in the chloroplast. This Chlamydomonas reinhardtii (Chlamydomonas smithii) protein is Heat shock 22 kDa protein, chloroplastic.